We begin with the raw amino-acid sequence, 158 residues long: Phosphopantetheine adenylyltransferase (158 aa).

S10 serves as a coordination point for substrate. ATP contacts are provided by residues 10 to 11 (SF) and H18. The substrate site is built by K42, L74, and R88. ATP contacts are provided by residues 89–91 (GLR), E99, and 124–130 (YANISSS).

This sequence belongs to the bacterial CoaD family. As to quaternary structure, homohexamer. It depends on Mg(2+) as a cofactor.

It localises to the cytoplasm. It carries out the reaction (R)-4'-phosphopantetheine + ATP + H(+) = 3'-dephospho-CoA + diphosphate. It functions in the pathway cofactor biosynthesis; coenzyme A biosynthesis; CoA from (R)-pantothenate: step 4/5. In terms of biological role, reversibly transfers an adenylyl group from ATP to 4'-phosphopantetheine, yielding dephospho-CoA (dPCoA) and pyrophosphate. This chain is Phosphopantetheine adenylyltransferase, found in Vesicomyosocius okutanii subsp. Calyptogena okutanii (strain HA).